We begin with the raw amino-acid sequence, 254 residues long: Pyrroloquinoline-quinone synthase (254 aa).

Belongs to the PqqC family.

The catalysed reaction is 6-(2-amino-2-carboxyethyl)-7,8-dioxo-1,2,3,4,7,8-hexahydroquinoline-2,4-dicarboxylate + 3 O2 = pyrroloquinoline quinone + 2 H2O2 + 2 H2O + H(+). Its pathway is cofactor biosynthesis; pyrroloquinoline quinone biosynthesis. Its function is as follows. Ring cyclization and eight-electron oxidation of 3a-(2-amino-2-carboxyethyl)-4,5-dioxo-4,5,6,7,8,9-hexahydroquinoline-7,9-dicarboxylic-acid to PQQ. This Rhodopseudomonas palustris (strain TIE-1) protein is Pyrroloquinoline-quinone synthase.